The sequence spans 263 residues: Non-homologous end joining protein Ku 3 (263 aa).

A Ku domain is found at 6–169; the sequence is FGLVSVPVQL…WADEVRDPHR (164 aa).

This sequence belongs to the prokaryotic Ku family. Homodimer. Interacts with LigD.

With LigD forms a non-homologous end joining (NHEJ) DNA repair enzyme, which repairs dsDNA breaks with reduced fidelity. Binds linear dsDNA with 5'- and 3'- overhangs but not closed circular dsDNA nor ssDNA. Recruits and stimulates the ligase activity of LigD. The sequence is that of Non-homologous end joining protein Ku 3 from Saccharopolyspora erythraea (strain ATCC 11635 / DSM 40517 / JCM 4748 / NBRC 13426 / NCIMB 8594 / NRRL 2338).